The sequence spans 215 residues: Peptide methionine sulfoxide reductase MsrA (215 aa).

Cysteine 58 is an active-site residue.

Belongs to the MsrA Met sulfoxide reductase family.

It carries out the reaction L-methionyl-[protein] + [thioredoxin]-disulfide + H2O = L-methionyl-(S)-S-oxide-[protein] + [thioredoxin]-dithiol. It catalyses the reaction [thioredoxin]-disulfide + L-methionine + H2O = L-methionine (S)-S-oxide + [thioredoxin]-dithiol. Has an important function as a repair enzyme for proteins that have been inactivated by oxidation. Catalyzes the reversible oxidation-reduction of methionine sulfoxide in proteins to methionine. In Pseudomonas aeruginosa (strain UCBPP-PA14), this protein is Peptide methionine sulfoxide reductase MsrA.